The sequence spans 342 residues: S-adenosylmethionine:tRNA ribosyltransferase-isomerase (342 aa).

It belongs to the QueA family. As to quaternary structure, monomer.

Its subcellular location is the cytoplasm. It carries out the reaction 7-aminomethyl-7-carbaguanosine(34) in tRNA + S-adenosyl-L-methionine = epoxyqueuosine(34) in tRNA + adenine + L-methionine + 2 H(+). Its pathway is tRNA modification; tRNA-queuosine biosynthesis. Its function is as follows. Transfers and isomerizes the ribose moiety from AdoMet to the 7-aminomethyl group of 7-deazaguanine (preQ1-tRNA) to give epoxyqueuosine (oQ-tRNA). The sequence is that of S-adenosylmethionine:tRNA ribosyltransferase-isomerase from Streptococcus pneumoniae serotype 19F (strain G54).